Reading from the N-terminus, the 239-residue chain is Sugar fermentation stimulation protein homolog (239 aa).

It belongs to the SfsA family.

The protein is Sugar fermentation stimulation protein homolog of Desulforamulus reducens (strain ATCC BAA-1160 / DSM 100696 / MI-1) (Desulfotomaculum reducens).